The sequence spans 598 residues: Membrane protein insertase YidC (598 aa).

Residues 7-27 traverse the membrane as a helical segment; sequence NYFIAIALSVLIVLGWQFLYM. The tract at residues 37–76 is disordered; that stretch reads AQEAQKAQQQTEQVQQPAAGGQTPAQTSGAAPSGQAAATA. Positions 40–76 are enriched in low complexity; it reads AQKAQQQTEQVQQPAAGGQTPAQTSGAAPSGQAAATA. The next 4 helical transmembrane spans lie at 377-397, 447-467, 492-512, and 538-558; these read FGVAILCTTIVVKALFFPLAS, WPVALQIPIFFSLYKVIYITI, LFGLLPFEGPTLLHLGVWPLI, and WMPLVFMFMLASFPAGLVIYW.

The protein belongs to the OXA1/ALB3/YidC family. Type 1 subfamily. Interacts with the Sec translocase complex via SecD. Specifically interacts with transmembrane segments of nascent integral membrane proteins during membrane integration.

The protein localises to the cell inner membrane. Functionally, required for the insertion and/or proper folding and/or complex formation of integral membrane proteins into the membrane. Involved in integration of membrane proteins that insert both dependently and independently of the Sec translocase complex, as well as at least some lipoproteins. Aids folding of multispanning membrane proteins. This is Membrane protein insertase YidC from Rhizobium johnstonii (strain DSM 114642 / LMG 32736 / 3841) (Rhizobium leguminosarum bv. viciae).